Consider the following 496-residue polypeptide: Angiopoietin-2 (496 aa).

A signal peptide spans 1 to 18; the sequence is MWQLVFFALSCDLVLAAA. Asn-89, Asn-119, Asn-133, Asn-151, Asn-240, and Asn-304 each carry an N-linked (GlcNAc...) asparagine glycan. Residues 130-255 are a coiled coil; the sequence is NLLNQTAEQT…KQQHDLMETV (126 aa). Positions 275 to 495 constitute a Fibrinogen C-terminal domain; that stretch reads KEEQIIFRDC…ATTMMIRPAD (221 aa). The cysteines at positions 284 and 313 are disulfide-linked. Asp-429, Asp-431, Cys-433, and Cys-435 together coordinate Ca(2+). 2 disulfide bridges follow: Cys-433-Cys-435 and Cys-437-Cys-450.

As to quaternary structure, interacts with TEK/TIE2, competing for the same binding site as ANGPT1. Interacts with ITGA5. Interacts with SVEP1/polydom. Interacts with THBD; this interaction significantly inhibits the generation of activated PC and TAFIa/CPB2 by the thrombin/thrombomodulin complex.

Its subcellular location is the secreted. Functionally, binds to TEK/TIE2, competing for the ANGPT1 binding site, and modulating ANGPT1 signaling. Can induce tyrosine phosphorylation of TEK/TIE2 in the absence of ANGPT1. In the absence of angiogenic inducers, such as VEGF, ANGPT2-mediated loosening of cell-matrix contacts may induce endothelial cell apoptosis with consequent vascular regression. In concert with VEGF, it may facilitate endothelial cell migration and proliferation, thus serving as a permissive angiogenic signal. Involved in the regulation of lymphangiogenesis. This chain is Angiopoietin-2 (ANGPT2), found in Sus scrofa (Pig).